The sequence spans 204 residues: Octanoyltransferase (204 aa).

A BPL/LPL catalytic domain is found at 27-202; sequence QGGEEALLLL…RFQPFLHLHL (176 aa). Substrate-binding positions include 65–72, 132–134, and 145–147; these read RGGDVTYH, SIG, and GFA. Residue cysteine 163 is the Acyl-thioester intermediate of the active site.

The protein belongs to the LipB family.

It is found in the cytoplasm. It carries out the reaction octanoyl-[ACP] + L-lysyl-[protein] = N(6)-octanoyl-L-lysyl-[protein] + holo-[ACP] + H(+). The protein operates within protein modification; protein lipoylation via endogenous pathway; protein N(6)-(lipoyl)lysine from octanoyl-[acyl-carrier-protein]: step 1/2. Functionally, catalyzes the transfer of endogenously produced octanoic acid from octanoyl-acyl-carrier-protein onto the lipoyl domains of lipoate-dependent enzymes. Lipoyl-ACP can also act as a substrate although octanoyl-ACP is likely to be the physiological substrate. The chain is Octanoyltransferase from Geobacter sp. (strain M21).